A 981-amino-acid chain; its full sequence is MLAVCARHGPAKLPPPPPPLAGERAAAWVVGRWWWRPAAAGRRGVVAARASFFSSRIGLDSQNYHTRDLSQLLWVGPVPGDIAEIEAYCRIFRAAEQLHTAVMSALCDPETGECPVRYDVQTEDLPVLEDKVAAVLGCMLALLNRGRKEVLSGRSGVASAFQGSEDSTMDKIPPLALFRGDLKRCCESMQVALASYLVPSEARGLDIWRKLQRLKNACYDAGFPRADGHPCPTLFANWFPVYFSTVPDDSLSDELEVAFWRGGQVSEEGLEWLLLKGFKTIVDLREEDVKDDLYLSAIHEAVSLGKIEVVNLPVEIGTAPSAEQVQRFAEIVSDSAKKPIYLHSQEGISRTSAMVSRWKQYVTRAERLATQNRSLNGNGKHVRNDQTEQLTNSPGFSSEGSENGTPLESDRTMEGETCDIDIETARHNLEITNSLPSEQSTEQGELHGTRTELQSNFRLESNPLKAQFPSCDVFSKKGMTDFFRSKKVYPKSVLNPRRRSNSLLVSRRKQSLSAEQNGAIDYEAAEFKVLKSSNGASFDNDYILSVASGITNGKPSNNGASTSVEDREMETSVVTVDPRTSDTSNSNGNAPLGSQKSAERNGSLYVEREKSDHVDGNMCASATGVVRLQSRRKAEMFLVRTDGFSCTREKVTESSLAFTHPSTQQQMLMWKSPPKTVLLLKKLGDELMEEAKEVASFLHHQEKMNVLVEPDVHDIFARIPGYGFVQTFYTQDTSDLHERVDFVACLGGDGVILHASNLFRTSVPPVVSFNLGSLGFLTSHNFEGFRQDLRAVIHGNNTLGVYITLRMRLRCEIFRNGKAMPGKVFDVLNEVVVDRGSNPYLSKIECYEHNHLITKVQGDGVIVATPTGSTAYSTAAGGSMVHPNVPCMLFTPICPHSLSFRPVILPDSARLELKIPDDARSNAWVSFDGKRRQQLSRGDSVQISMSQHPLPTVNKSDQTGDWFRSLIRCLNWNERLDQKAL.

The calmodulin-binding stretch occupies residues 319–364 (APSAEQVQRFAEIVSDSAKKPIYLHSQEGISRTSAMVSRWKQYVTR). Disordered stretches follow at residues 369–413 (ATQN…DRTM) and 551–601 (TNGK…AERN). Composition is skewed to polar residues over residues 387–406 (TEQL…NGTP), 551–563 (TNGK…ASTS), and 581–596 (SDTS…GSQK).

The protein belongs to the NAD kinase family.

Its subcellular location is the plastid. The protein resides in the chloroplast. It carries out the reaction NAD(+) + ATP = ADP + NADP(+) + H(+). Functionally, involved in chlorophyll synthesis and chloroplast protection against oxidative damage. This is Probable NAD kinase 2, chloroplastic from Oryza sativa subsp. japonica (Rice).